Consider the following 411-residue polypeptide: MKMVLSQRQREELNQAIADYLGSNGYGDSLETFRKEADVSTESEKKFGGLLEKKWTSVIRLQKKVMELEAKLTEAEKEVIEGAPTKNKRTPGEWIPRPPEKYSLTGHRASITRVIFHPIFGLMVSASEDATIKIWDFETGEYERSLKGHTDSVQDVAFDSQGKLLASCSADLSIKLWDFQQSYECVKTMHGHDHNVSSVAFVPAGDYVLSASRDRTIKMWEVATGYCVKTYTGHREWVRMVRVHIEGSIFATCSNDHTIRVWLMNSKDCKVELRDHEHTVECIAWAPEAAASAINEAAGADNKKGHHQGPFLASGSRDKTIRIWDVSVGLCLLTLNGHDNWVRGLAFHPGGKYLVSASDDKTIRVWDLRNKRCMKTLYAHQHFCTSIDFHKAHPYVISGSVDQTVKVWECR.

The 33-residue stretch at Q9 to T41 folds into the LisH domain. A coiled-coil region spans residues T56–A83. WD repeat units follow at residues G106 to K147, G148 to K187, G191 to T230, G233 to E272, D275 to T334, G337 to T376, and A379 to R411.

Belongs to the WD repeat LIS1/nudF family.

The protein resides in the cytoplasm. It localises to the cytoskeleton. It is found in the microtubule organizing center. The protein localises to the centrosome. Its function is as follows. Positively regulates the activity of the minus-end directed microtubule motor protein dynein. May enhance dynein-mediated microtubule sliding by targeting dynein to the microtubule plus end. Required for several dynein- and microtubule-dependent processes. This is Lissencephaly-1 homolog from Drosophila persimilis (Fruit fly).